The following is a 343-amino-acid chain: MDDVIIIGGGPAGLFASFYSGLRGMRVRIIDIQDKLGGKMHVYPEKIIWDIGGLAPKPCFEVIQDTVKQGLHFEPEVNLEERVIDIRKIEQQHFEVETDKGNVFSSKSVIIAIGGGIINPKQLDIKDAERYKLTNLHYVVQSLKKFKDKHVLISGAGNSALDWANDLSGYAKSVTLIYRKADIKGYEVMKEKLEQLNVKKLPNTHIHQLIGDETQTQIEQVILENIETGEHTVKSFDDVIISHGFDRENTLLEQSSAKVDMFNEYSIKGFGNTATSIDGLYACGDIIYHEAKAHLIASAFSDAANAANLAKLYIEPKAKAEGYVSSHNEIFKESNKVVMKKYL.

FAD-binding residues include Asp31, Lys39, Tyr43, Val83, Ile118, Asp285, and Ser326.

This sequence belongs to the ferredoxin--NADP reductase type 2 family. In terms of assembly, homodimer. FAD is required as a cofactor.

It catalyses the reaction 2 reduced [2Fe-2S]-[ferredoxin] + NADP(+) + H(+) = 2 oxidized [2Fe-2S]-[ferredoxin] + NADPH. In Staphylococcus saprophyticus subsp. saprophyticus (strain ATCC 15305 / DSM 20229 / NCIMB 8711 / NCTC 7292 / S-41), this protein is Ferredoxin--NADP reductase.